Here is a 489-residue protein sequence, read N- to C-terminus: Potassium voltage-gated channel subfamily A member 7 (489 aa).

The helical transmembrane segment at valine 176–threonine 196 threads the bilayer. N-linked (GlcNAc...) asparagine glycosylation occurs at asparagine 224. A helical transmembrane segment spans residues phenylalanine 242–valine 262. Cysteine 264 is lipidated: S-palmitoyl cysteine. Residues valine 274–leucine 294 traverse the membrane as a helical segment. Residues isoleucine 309 to serine 328 traverse the membrane as a helical; Voltage-sensor segment. Residues leucine 345–phenylalanine 365 traverse the membrane as a helical segment. The Selectivity filter motif lies at threonine 391 to aspartate 396. A helical membrane pass occupies residues isoleucine 406–isoleucine 426.

This sequence belongs to the potassium channel family. A (Shaker) (TC 1.A.1.2) subfamily. Kv1.7/KCNA7 sub-subfamily. In terms of assembly, heterotetramer of potassium channel proteins. In terms of tissue distribution, detected in heart, skeletal muscle, brain, and pancreatic islet cells.

It localises to the membrane. It carries out the reaction K(+)(in) = K(+)(out). Its function is as follows. Mediates the voltage-dependent potassium ion permeability of excitable membranes. Assuming opened or closed conformations in response to the voltage difference across the membrane, the protein forms a potassium-selective channel through which potassium ions may pass in accordance with their electrochemical gradient. Channels formed by isoform 1 inactivate faster than channels formed by isoform 2. In Mus musculus (Mouse), this protein is Potassium voltage-gated channel subfamily A member 7 (Kcna7).